The primary structure comprises 65 residues: Large ribosomal subunit protein bL35 (65 aa).

Residues 20-42 are disordered; sequence GKVRRHHANASHIMTTKTTKRKR.

This sequence belongs to the bacterial ribosomal protein bL35 family.

The chain is Large ribosomal subunit protein bL35 from Syntrophus aciditrophicus (strain SB).